Reading from the N-terminus, the 263-residue chain is 4-hydroxy-2-oxo-heptane-1,7-dioate aldolase (263 aa).

Catalysis depends on His-45, which acts as the Proton acceptor. Position 147 (Gln-147) interacts with substrate. An a divalent metal cation-binding site is contributed by Glu-149. Substrate contacts are provided by Ala-174 and Asp-175. Asp-175 lines the a divalent metal cation pocket.

Belongs to the HpcH/HpaI aldolase family. In terms of assembly, homohexamer; trimer of dimers. Requires a divalent metal cation as cofactor.

The enzyme catalyses 4-hydroxy-2-oxoheptanedioate = succinate semialdehyde + pyruvate. It participates in aromatic compound metabolism; 4-hydroxyphenylacetate degradation; pyruvate and succinate semialdehyde from 4-hydroxyphenylacetate: step 7/7. Catalyzes the reversible retro-aldol cleavage of 4-hydroxy-2-ketoheptane-1,7-dioate (HKHD) to pyruvate and succinic semialdehyde. This is 4-hydroxy-2-oxo-heptane-1,7-dioate aldolase from Salmonella choleraesuis (strain SC-B67).